We begin with the raw amino-acid sequence, 66 residues long: Large ribosomal subunit protein bL35 (66 aa).

This sequence belongs to the bacterial ribosomal protein bL35 family.

The sequence is that of Large ribosomal subunit protein bL35 from Brucella melitensis biotype 1 (strain ATCC 23456 / CCUG 17765 / NCTC 10094 / 16M).